A 199-amino-acid chain; its full sequence is Inner membrane protein E199L (199 aa).

N-linked (GlcNAc...) asparagine; by host glycosylation is present at Asn131. The chain crosses the membrane as a helical span at residues 150 to 170; the sequence is INVMNHPFLTLILIILILVII.

The protein belongs to the asfivirus E199L family. In terms of assembly, interacts with host PYCR2; this interaction results in autophagy activation. In terms of processing, contains intramolecular disulfide bonds.

The protein resides in the virion membrane. The protein localises to the host membrane. Its function is as follows. Essential for viral fusion with host endosomal membrane and core release. Not required for virus morphogenesis and egress. Induces complete autophagy through the interaction with and down-regulation of host PYCR2. This is Inner membrane protein E199L from African swine fever virus (isolate Tick/Malawi/Lil 20-1/1983) (ASFV).